The following is a 163-amino-acid chain: Large ribosomal subunit protein bL17 (163 aa).

A disordered region spans residues 127–163; that stretch reads KEVKKAKSRRGGKAKKAEGTAPEAPAAESESTTEASE. Over residues 128-140 the composition is skewed to basic residues; that stretch reads EVKKAKSRRGGKA. A compositionally biased stretch (low complexity) spans 145-163; sequence GTAPEAPAAESESTTEASE.

This sequence belongs to the bacterial ribosomal protein bL17 family. Part of the 50S ribosomal subunit. Contacts protein L32.

This chain is Large ribosomal subunit protein bL17, found in Flavobacterium johnsoniae (strain ATCC 17061 / DSM 2064 / JCM 8514 / BCRC 14874 / CCUG 350202 / NBRC 14942 / NCIMB 11054 / UW101) (Cytophaga johnsonae).